We begin with the raw amino-acid sequence, 107 residues long: Lipid-anchored protein YDL012C (107 aa).

Residues 1 to 18 (MSAQDYYGNSASKQSYSR) are compositionally biased toward polar residues. The segment at 1 to 86 (MSAQDYYGNS…VQQQPASSGN (86 aa)) is disordered. Ser-2 is modified (N-acetylserine). Lys-13 is covalently cross-linked (Glycyl lysine isopeptide (Lys-Gly) (interchain with G-Cter in ubiquitin)). Residues 35–81 (PSQSQQNYYPPQQQQQQYQQQPQYYQQQQPQYYQQHPQQPIYVQQQP) are compositionally biased toward low complexity.

It belongs to the CYSTM1 family.

The protein resides in the cell membrane. The protein is Lipid-anchored protein YDL012C of Saccharomyces cerevisiae (strain ATCC 204508 / S288c) (Baker's yeast).